We begin with the raw amino-acid sequence, 481 residues long: Aspartyl/glutamyl-tRNA(Asn/Gln) amidotransferase subunit B (481 aa).

The protein belongs to the GatB/GatE family. GatB subfamily. Heterotrimer of A, B and C subunits.

It carries out the reaction L-glutamyl-tRNA(Gln) + L-glutamine + ATP + H2O = L-glutaminyl-tRNA(Gln) + L-glutamate + ADP + phosphate + H(+). It catalyses the reaction L-aspartyl-tRNA(Asn) + L-glutamine + ATP + H2O = L-asparaginyl-tRNA(Asn) + L-glutamate + ADP + phosphate + 2 H(+). In terms of biological role, allows the formation of correctly charged Asn-tRNA(Asn) or Gln-tRNA(Gln) through the transamidation of misacylated Asp-tRNA(Asn) or Glu-tRNA(Gln) in organisms which lack either or both of asparaginyl-tRNA or glutaminyl-tRNA synthetases. The reaction takes place in the presence of glutamine and ATP through an activated phospho-Asp-tRNA(Asn) or phospho-Glu-tRNA(Gln). This chain is Aspartyl/glutamyl-tRNA(Asn/Gln) amidotransferase subunit B, found in Pseudomonas syringae pv. tomato (strain ATCC BAA-871 / DC3000).